The following is a 509-amino-acid chain: Hexokinase-4, chloroplastic (509 aa).

A chloroplast-targeting transit peptide spans 1 to 37 (MSAAAAIASPIPAAIAVVQQQRRGRSRGGGSGAAAVR). A Hexokinase domain is found at 45–496 (SAIAPILADL…SGIGAALLAA (452 aa)). The interval 100-238 (TGNETGLFYA…GLDMRVSALV (139 aa)) is hexokinase small subdomain. ADP-binding residues include Gly114, Thr115, and Asn116. Residues Thr204, Lys205, Asn239, and Asp240 each contribute to the D-glucose site. Residues 239 to 485 (NDTVGTLAGA…NRIAIEHTKD (247 aa)) form a hexokinase large subdomain region. Thr263 is an ADP binding site. Positions 266, 294, and 324 each coordinate D-glucose. Gly450 lines the ADP pocket.

Belongs to the hexokinase family. Expressed in roots, leaves, flowers, immature seeds, endosperm and seed coat.

Its subcellular location is the plastid. The protein resides in the chloroplast stroma. The catalysed reaction is a D-hexose + ATP = a D-hexose 6-phosphate + ADP + H(+). It catalyses the reaction D-fructose + ATP = D-fructose 6-phosphate + ADP + H(+). The enzyme catalyses D-glucose + ATP = D-glucose 6-phosphate + ADP + H(+). It participates in carbohydrate metabolism; hexose metabolism. Its pathway is carbohydrate degradation; glycolysis; D-glyceraldehyde 3-phosphate and glycerone phosphate from D-glucose: step 1/4. Functionally, fructose and glucose phosphorylating enzyme. The polypeptide is Hexokinase-4, chloroplastic (HXK4) (Oryza sativa subsp. japonica (Rice)).